Consider the following 409-residue polypeptide: Divalent metal cation transporter MntH (409 aa).

Transmembrane regions (helical) follow at residues 19 to 39 (LSLMGPAFIAAIGYIDPGNFA), 46 to 66 (ASFGYTLLWVVVWANFMAMLI), 98 to 118 (WVQAEIIAMATDLAEFIGAAI), 122 to 142 (LLLGVTLLEGAVLTGIATFLI), 155 to 175 (LVIGGLLLFVAAAYIVELVFS), 196 to 216 (AVFLAAGVLGATIMPHVIYLH), 241 to 261 (IAMTIAGFVNLAMMATAAAAF), 290 to 310 (IFGLSLVAAGLSSTVVGTLAG), 320 to 340 (FYIPIWVRRTVTMLPSFIVIL), 348 to 368 (ILVMSQVLLSFGIALALVPLL), and 388 to 408 (ILGKLIVLVVIGLNAYLLVSL).

It belongs to the NRAMP family.

Its subcellular location is the cell inner membrane. Its function is as follows. H(+)-stimulated, divalent metal cation uptake system. The sequence is that of Divalent metal cation transporter MntH from Yersinia enterocolitica serotype O:8 / biotype 1B (strain NCTC 13174 / 8081).